Consider the following 365-residue polypeptide: Cytoplasmic tRNA 2-thiolation protein 1 (365 aa).

Belongs to the TtcA family. CTU1/NCS6/ATPBD3 subfamily.

The protein resides in the cytoplasm. Its pathway is tRNA modification; 5-methoxycarbonylmethyl-2-thiouridine-tRNA biosynthesis. Plays a central role in 2-thiolation of mcm(5)S(2)U at tRNA wobble positions of tRNA(Lys), tRNA(Glu) and tRNA(Gln). Directly binds tRNAs and probably acts by catalyzing adenylation of tRNAs, an intermediate required for 2-thiolation. It is unclear whether it acts as a sulfurtransferase that transfers sulfur from thiocarboxylated URM1 onto the uridine of tRNAs at wobble position. Prior mcm(5) tRNA modification by the elongator complex is required for 2-thiolation. May also be involved in protein urmylation. The chain is Cytoplasmic tRNA 2-thiolation protein 1 from Yarrowia lipolytica (strain CLIB 122 / E 150) (Yeast).